Consider the following 420-residue polypeptide: Deoxyribodipyrimidine photo-lyase (420 aa).

One can recognise a Photolyase/cryptochrome alpha/beta domain in the interval 2-124; that stretch reads GPLLVWHRGD…PLHLLPAPHL (123 aa). Residues 152-175 form a disordered region; the sequence is APEALPKGPEEGEIPREDPGLPLP. Residues 159–170 are compositionally biased toward basic and acidic residues; that stretch reads GPEEGEIPREDP. Position 197 (tyrosine 197) interacts with FAD. Position 201 (arginine 201) interacts with DNA. 209 to 213 is a binding site for FAD; sequence GSRLS. 2 interaction with DNA regions span residues 244–251 and 310–311; these read ELLWRDFS and NR. 341-343 serves as a coordination point for FAD; sequence DGD. Glutamine 373 lines the DNA pocket.

It belongs to the DNA photolyase class-1 family. Monomer. It depends on FAD as a cofactor.

It catalyses the reaction cyclobutadipyrimidine (in DNA) = 2 pyrimidine residues (in DNA).. In terms of biological role, involved in repair of UV radiation-induced DNA damage. Catalyzes the light-dependent monomerization (300-600 nm) of cyclobutyl pyrimidine dimers (in cis-syn configuration), which are formed between adjacent bases on the same DNA strand upon exposure to ultraviolet radiation. This chain is Deoxyribodipyrimidine photo-lyase (phr), found in Thermus thermophilus (strain ATCC BAA-163 / DSM 7039 / HB27).